The sequence spans 258 residues: Type III pantothenate kinase (258 aa).

Residue 6–13 (DIGNTNTV) coordinates ATP. Substrate contacts are provided by residues tyrosine 100 and 107–110 (GADR). Aspartate 109 acts as the Proton acceptor in catalysis. Aspartate 129 serves as a coordination point for K(+). Residue threonine 132 coordinates ATP. Position 185 (threonine 185) interacts with substrate.

This sequence belongs to the type III pantothenate kinase family. Homodimer. NH4(+) is required as a cofactor. It depends on K(+) as a cofactor.

The protein localises to the cytoplasm. The catalysed reaction is (R)-pantothenate + ATP = (R)-4'-phosphopantothenate + ADP + H(+). Its pathway is cofactor biosynthesis; coenzyme A biosynthesis; CoA from (R)-pantothenate: step 1/5. Its function is as follows. Catalyzes the phosphorylation of pantothenate (Pan), the first step in CoA biosynthesis. In Syntrophobacter fumaroxidans (strain DSM 10017 / MPOB), this protein is Type III pantothenate kinase.